The sequence spans 292 residues: Golgi to ER traffic protein 2 (292 aa).

The span at 1–18 (MSELSAEEKRKLLRERRQ) shows a compositional bias: basic and acidic residues. Residues 1-80 (MSELSAEEKR…TPLHDDPEVP (80 aa)) are disordered. At 1 to 158 (MSELSAEEKR…SQYHAYEQKQ (158 aa)) the chain is on the cytoplasmic side. Polar residues-rich tracts occupy residues 29 to 47 (RLNNILSQGSSVKSSNVTS) and 55 to 71 (ATTTVMDLPSRETQSPT). Residues 159-179 (WKARFLVVRWIIHTLNFVYHY) form a helical membrane-spanning segment. The Lumenal portion of the chain corresponds to 180–205 (IASGYKLSASPYAFVRAQAVDSHVRT). The helical transmembrane segment at 206-225 (FFTAFLTVEVAVISAYFLVM) threads the bilayer. Residues 226–268 (SQPKFKDFSRENLVSRILSMASAVVPAVGRYQPLVTRALVYWN) are Cytoplasmic-facing. The helical transmembrane segment at 269–289 (GASIFVGDLMLMVFYFGITSV) threads the bilayer. Over 290–292 (LGN) the chain is Lumenal.

This sequence belongs to the GET2 family. Component of the Golgi to ER traffic (GET) complex, which is composed of GET1, GET2 and GET3. Within the complex, GET1 and GET2 form a heterotetramer which is stabilized by phosphatidylinositol binding and which binds to the GET3 homodimer.

Its subcellular location is the endoplasmic reticulum membrane. It localises to the golgi apparatus membrane. Its function is as follows. Required for the post-translational delivery of tail-anchored (TA) proteins to the endoplasmic reticulum. Together with GET1, acts as a membrane receptor for soluble GET3, which recognizes and selectively binds the transmembrane domain of TA proteins in the cytosol. The GET complex cooperates with the HDEL receptor ERD2 to mediate the ATP-dependent retrieval of resident ER proteins that contain a C-terminal H-D-E-L retention signal from the Golgi to the ER. The chain is Golgi to ER traffic protein 2 from Clavispora lusitaniae (strain ATCC 42720) (Yeast).